A 544-amino-acid polypeptide reads, in one-letter code: Chaperonin GroEL 1 (544 aa).

Residues 29 to 32 (TLGP), 86 to 90 (DGTTT), glycine 413, 479 to 481 (NAA), and aspartate 495 contribute to the ATP site.

This sequence belongs to the chaperonin (HSP60) family. Forms a cylinder of 14 subunits composed of two heptameric rings stacked back-to-back. Interacts with the co-chaperonin GroES.

It localises to the cytoplasm. It carries out the reaction ATP + H2O + a folded polypeptide = ADP + phosphate + an unfolded polypeptide.. Functionally, together with its co-chaperonin GroES, plays an essential role in assisting protein folding. The GroEL-GroES system forms a nano-cage that allows encapsulation of the non-native substrate proteins and provides a physical environment optimized to promote and accelerate protein folding. The protein is Chaperonin GroEL 1 of Synechococcus sp. (strain CC9902).